The following is a 101-amino-acid chain: Small ribosomal subunit protein uS14A (101 aa).

The disordered stretch occupies residues 35–56; the sequence is TSSYEQRLDAQRALSRQPRDAS.

It belongs to the universal ribosomal protein uS14 family. As to quaternary structure, part of the 30S ribosomal subunit. Contacts proteins S3 and S10.

Functionally, binds 16S rRNA, required for the assembly of 30S particles and may also be responsible for determining the conformation of the 16S rRNA at the A site. In Mycobacterium marinum (strain ATCC BAA-535 / M), this protein is Small ribosomal subunit protein uS14A.